Reading from the N-terminus, the 429-residue chain is Enolase (429 aa).

Gln163 is a binding site for (2R)-2-phosphoglycerate. The Proton donor role is filled by Glu205. Asp242, Glu287, and Asp314 together coordinate Mg(2+). Lys339, Arg368, Ser369, and Lys390 together coordinate (2R)-2-phosphoglycerate. The active-site Proton acceptor is the Lys339.

This sequence belongs to the enolase family. The cofactor is Mg(2+).

It localises to the cytoplasm. Its subcellular location is the secreted. The protein resides in the cell surface. It catalyses the reaction (2R)-2-phosphoglycerate = phosphoenolpyruvate + H2O. The protein operates within carbohydrate degradation; glycolysis; pyruvate from D-glyceraldehyde 3-phosphate: step 4/5. Functionally, catalyzes the reversible conversion of 2-phosphoglycerate (2-PG) into phosphoenolpyruvate (PEP). It is essential for the degradation of carbohydrates via glycolysis. This is Enolase from Anaeromyxobacter dehalogenans (strain 2CP-1 / ATCC BAA-258).